Here is a 274-residue protein sequence, read N- to C-terminus: Shikimate dehydrogenase (NADP(+)) (274 aa).

Shikimate is bound by residues 15-17 and T62; that span reads SKS. K66 acts as the Proton acceptor in catalysis. Residue D78 coordinates NADP(+). N87 and D102 together coordinate shikimate. Residues 127–131 and M215 each bind NADP(+); that span reads GAGGA. Y217 lines the shikimate pocket. Residue G239 coordinates NADP(+).

Belongs to the shikimate dehydrogenase family. As to quaternary structure, homodimer.

The catalysed reaction is shikimate + NADP(+) = 3-dehydroshikimate + NADPH + H(+). Its pathway is metabolic intermediate biosynthesis; chorismate biosynthesis; chorismate from D-erythrose 4-phosphate and phosphoenolpyruvate: step 4/7. Functionally, involved in the biosynthesis of the chorismate, which leads to the biosynthesis of aromatic amino acids. Catalyzes the reversible NADPH linked reduction of 3-dehydroshikimate (DHSA) to yield shikimate (SA). The protein is Shikimate dehydrogenase (NADP(+)) of Dechloromonas aromatica (strain RCB).